Reading from the N-terminus, the 268-residue chain is Ubiquinone biosynthesis protein COQ4 homolog, mitochondrial (268 aa).

The transit peptide at 1–25 (MMQRCLRLQKPLALRRGLHLAQVNS) directs the protein to the mitochondrion. Residues histidine 171, aspartate 172, histidine 175, and glutamate 187 each coordinate Zn(2+).

The protein belongs to the COQ4 family. Component of a multi-subunit COQ enzyme complex. Zn(2+) serves as cofactor.

It localises to the mitochondrion inner membrane. It carries out the reaction a 4-hydroxy-3-methoxy-5-(all-trans-polyprenyl)benzoate + H(+) = a 2-methoxy-6-(all-trans-polyprenyl)phenol + CO2. It functions in the pathway cofactor biosynthesis; ubiquinone biosynthesis. Its function is as follows. Lyase that catalyzes the C1-decarboxylation of 4-hydroxy-3-methoxy-5-(all-trans-polyprenyl)benzoic acid into 2-methoxy-6-(all-trans-polyprenyl)phenol during ubiquinone biosynthesis. The chain is Ubiquinone biosynthesis protein COQ4 homolog, mitochondrial from Drosophila simulans (Fruit fly).